Reading from the N-terminus, the 420-residue chain is Transcription factor bHLH89 (420 aa).

The tract at residues 196–216 (EENNNLDDGLNRKGRGSKKRK) is disordered. Positions 207–216 (RKGRGSKKRK) are enriched in basic residues. Residues 212–261 (SKKRKIFPTERERRVHFKDRFGDLKNLIPNPTKNDRASIVGEAIDYIKEL) form the bHLH domain.

In terms of assembly, homodimer. As to expression, flowers.

Its subcellular location is the nucleus. This is Transcription factor bHLH89 (BHLH89) from Arabidopsis thaliana (Mouse-ear cress).